The sequence spans 286 residues: Protein HEAT-STRESS-ASSOCIATED 32 (286 aa).

Belongs to the phosphosulfolactate synthase family.

Transactivator required, together with HSP101, for long-term acquired thermotolerance (LAT) maintenance, probably by regulating heat-inducible genes expression, thus being a cellular component of thermomemory. This is Protein HEAT-STRESS-ASSOCIATED 32 from Arabidopsis thaliana (Mouse-ear cress).